Reading from the N-terminus, the 68-residue chain is Bacteriocin lactococcin-B (68 aa).

A propeptide spanning residues 1 to 21 (MKNQLNFNIVSDEELAEVNGG) is cleaved from the precursor.

Its subcellular location is the secreted. In terms of biological role, kills Lactococci by dissipating the membrane potential of the cells. The polypeptide is Bacteriocin lactococcin-B (lcnB) (Lactococcus lactis subsp. cremoris (Streptococcus cremoris)).